The following is a 474-amino-acid chain: CUGBP Elav-like family member 4 (474 aa).

A sufficient for RNA-binding and MSE-dependent splicing activity region spans residues Met-1–Gln-287. Residues Leu-18–Gly-28 are compositionally biased toward polar residues. The disordered stretch occupies residues Leu-18–Gly-41. RRM domains are found at residues Ile-54–Ser-135 and Arg-141–Thr-221. The segment at Arg-228–Phe-247 is necessary for TNNT2 exon 5 inclusion. Residues Pro-392–Pro-467 enclose the RRM 3 domain.

The protein belongs to the CELF/BRUNOL family.

It is found in the nucleus. It localises to the cytoplasm. Its function is as follows. RNA-binding protein implicated in the regulation of pre-mRNA alternative splicing. Mediates exon inclusion and/or exclusion in pre-mRNA that are subject to tissue-specific and developmentally regulated alternative splicing. Specifically activates exon 5 inclusion of cardiac isoforms of TNNT2 during heart remodeling at the juvenile to adult transition. Promotes exclusion of both the smooth muscle (SM) and non-muscle (NM) exons in actinin pre-mRNAs. Activates the splicing of MAPT/Tau exon 10. Binds to muscle-specific splicing enhancer (MSE) intronic sites flanking the alternative exon 5 of TNNT2 pre-mRNA. This chain is CUGBP Elav-like family member 4 (CELF4), found in Macaca fascicularis (Crab-eating macaque).